A 177-amino-acid polypeptide reads, in one-letter code: GTP-dependent dephospho-CoA kinase (177 aa).

The GTP site is built by D48, V49, V50, D67, K69, and E124.

It belongs to the GTP-dependent DPCK family.

It catalyses the reaction 3'-dephospho-CoA + GTP = GDP + CoA + H(+). It participates in cofactor biosynthesis; coenzyme A biosynthesis. In terms of biological role, catalyzes the GTP-dependent phosphorylation of the 3'-hydroxyl group of dephosphocoenzyme A to form coenzyme A (CoA). The sequence is that of GTP-dependent dephospho-CoA kinase from Pyrococcus furiosus (strain ATCC 43587 / DSM 3638 / JCM 8422 / Vc1).